A 179-amino-acid polypeptide reads, in one-letter code: Large ribosomal subunit protein uL6 (179 aa).

This sequence belongs to the universal ribosomal protein uL6 family. Part of the 50S ribosomal subunit.

In terms of biological role, this protein binds to the 23S rRNA, and is important in its secondary structure. It is located near the subunit interface in the base of the L7/L12 stalk, and near the tRNA binding site of the peptidyltransferase center. The polypeptide is Large ribosomal subunit protein uL6 (Alkaliphilus metalliredigens (strain QYMF)).